Here is a 952-residue protein sequence, read N- to C-terminus: Glycine dehydrogenase (decarboxylating) (952 aa).

The residue at position 703 (lysine 703) is an N6-(pyridoxal phosphate)lysine.

Belongs to the GcvP family. The glycine cleavage system is composed of four proteins: P, T, L and H. The cofactor is pyridoxal 5'-phosphate.

It carries out the reaction N(6)-[(R)-lipoyl]-L-lysyl-[glycine-cleavage complex H protein] + glycine + H(+) = N(6)-[(R)-S(8)-aminomethyldihydrolipoyl]-L-lysyl-[glycine-cleavage complex H protein] + CO2. The glycine cleavage system catalyzes the degradation of glycine. The P protein binds the alpha-amino group of glycine through its pyridoxal phosphate cofactor; CO(2) is released and the remaining methylamine moiety is then transferred to the lipoamide cofactor of the H protein. The protein is Glycine dehydrogenase (decarboxylating) of Mycobacterium leprae (strain Br4923).